Here is a 423-residue protein sequence, read N- to C-terminus: Amino acid transporter AVT1J (423 aa).

The next 11 helical transmembrane spans lie at 39 to 59 (CFHG…YALA), 63 to 83 (WLSL…AILI), 110 to 130 (VIVS…FLIL), 151 to 171 (FQGK…SVWL), 186 to 206 (FASG…GVGF), 219 to 239 (VATS…FPTL), 252 to 272 (VMII…VLGY), 297 to 317 (AIWT…TPII), 333 to 355 (ASGF…LLPF), 359 to 381 (LMSL…LCYL), and 390 to 410 (LGFE…VVIT).

It belongs to the amino acid/polyamine transporter 2 family. Amino acid/auxin permease (AAAP) (TC 2.A.18.5) subfamily.

It is found in the membrane. This chain is Amino acid transporter AVT1J, found in Arabidopsis thaliana (Mouse-ear cress).